Consider the following 293-residue polypeptide: Protease HtpX (293 aa).

The next 2 membrane-spanning stretches (helical) occupy residues 4–24 (IALFLLTNLAVMLVFGLVLSL) and 34–54 (GLMIMAGLFGFGGAFVSLLMS). A Zn(2+)-binding site is contributed by His139. Glu140 is a catalytic residue. Position 143 (His143) interacts with Zn(2+). 2 consecutive transmembrane segments (helical) span residues 158–178 (IVNTFVIFISRLIAQVAAGFL) and 193–213 (MVYFAVSMVLELVFGILASII). Position 222 (Glu222) interacts with Zn(2+).

This sequence belongs to the peptidase M48B family. Zn(2+) serves as cofactor.

The protein resides in the cell inner membrane. The chain is Protease HtpX from Yersinia enterocolitica serotype O:8 / biotype 1B (strain NCTC 13174 / 8081).